The sequence spans 191 residues: Fe/S biogenesis protein NfuA (191 aa).

[4Fe-4S] cluster contacts are provided by cysteine 149 and cysteine 152.

Belongs to the NfuA family. As to quaternary structure, homodimer. The cofactor is [4Fe-4S] cluster.

Involved in iron-sulfur cluster biogenesis. Binds a 4Fe-4S cluster, can transfer this cluster to apoproteins, and thereby intervenes in the maturation of Fe/S proteins. Could also act as a scaffold/chaperone for damaged Fe/S proteins. The polypeptide is Fe/S biogenesis protein NfuA (Klebsiella pneumoniae (strain 342)).